A 217-amino-acid polypeptide reads, in one-letter code: U exon protein (217 aa).

Disordered stretches follow at residues 68 to 110 (SKIF…TNHG) and 170 to 217 (EKEA…RQGR). The span at 202-217 (GGFQQPTGANQARQGR) shows a compositional bias: polar residues.

Belongs to the adenoviridae U exon protein family.

It localises to the host nucleus. The protein resides in the host nucleoplasm. The protein localises to the host nucleolus. In terms of biological role, might play a role in viral replication since it is associated with viral replication centers. Seems to have an effect on DBP localization. In Homo sapiens (Human), this protein is U exon protein.